A 389-amino-acid polypeptide reads, in one-letter code: 8-amino-7-oxononanoate synthase 2 (389 aa).

Arginine 21 serves as a coordination point for substrate. Residue 108–109 participates in pyridoxal 5'-phosphate binding; it reads GY. Position 133 (histidine 133) interacts with substrate. Residues serine 180, 205–208, and 234–237 contribute to the pyridoxal 5'-phosphate site; these read DDAH and TLSK. At lysine 237 the chain carries N6-(pyridoxal phosphate)lysine. Residue threonine 351 coordinates substrate.

Belongs to the class-II pyridoxal-phosphate-dependent aminotransferase family. BioF subfamily. As to quaternary structure, homodimer. It depends on pyridoxal 5'-phosphate as a cofactor.

The catalysed reaction is 6-carboxyhexanoyl-[ACP] + L-alanine + H(+) = (8S)-8-amino-7-oxononanoate + holo-[ACP] + CO2. The protein operates within cofactor biosynthesis; biotin biosynthesis. Functionally, catalyzes the decarboxylative condensation of pimeloyl-[acyl-carrier protein] and L-alanine to produce 8-amino-7-oxononanoate (AON), [acyl-carrier protein], and carbon dioxide. The sequence is that of 8-amino-7-oxononanoate synthase 2 (bioF) from Bacillus subtilis (strain 168).